Consider the following 462-residue polypeptide: Adenylosuccinate lyase (462 aa).

Residues 21–22 (RY), 87–89 (KHD), and 114–115 (TS) contribute to the N(6)-(1,2-dicarboxyethyl)-AMP site. Histidine 162 functions as the Proton donor/acceptor in the catalytic mechanism. N(6)-(1,2-dicarboxyethyl)-AMP is bound at residue glutamine 236. The Proton donor/acceptor role is filled by serine 287. N(6)-(1,2-dicarboxyethyl)-AMP-binding positions include serine 288, 293–295 (KRN), and 332–336 (SAERC).

It belongs to the lyase 1 family. Adenylosuccinate lyase subfamily. In terms of assembly, homotetramer. Residues from neighboring subunits contribute catalytic and substrate-binding residues to each active site.

It catalyses the reaction N(6)-(1,2-dicarboxyethyl)-AMP = fumarate + AMP. The enzyme catalyses (2S)-2-[5-amino-1-(5-phospho-beta-D-ribosyl)imidazole-4-carboxamido]succinate = 5-amino-1-(5-phospho-beta-D-ribosyl)imidazole-4-carboxamide + fumarate. It participates in purine metabolism; AMP biosynthesis via de novo pathway; AMP from IMP: step 2/2. It functions in the pathway purine metabolism; IMP biosynthesis via de novo pathway; 5-amino-1-(5-phospho-D-ribosyl)imidazole-4-carboxamide from 5-amino-1-(5-phospho-D-ribosyl)imidazole-4-carboxylate: step 2/2. Functionally, catalyzes two reactions in de novo purine nucleotide biosynthesis. Catalyzes the breakdown of 5-aminoimidazole- (N-succinylocarboxamide) ribotide (SAICAR or 2-[5-amino-1-(5-phospho-beta-D-ribosyl)imidazole-4-carboxamido]succinate) to 5-aminoimidazole-4-carboxamide ribotide (AICAR or 5-amino-1-(5-phospho-beta-D-ribosyl)imidazole-4-carboxamide) and fumarate, and of adenylosuccinate (ADS or N(6)-(1,2-dicarboxyethyl)-AMP) to adenosine monophosphate (AMP) and fumarate. The protein is Adenylosuccinate lyase (purB) of Methanocaldococcus jannaschii (strain ATCC 43067 / DSM 2661 / JAL-1 / JCM 10045 / NBRC 100440) (Methanococcus jannaschii).